A 121-amino-acid polypeptide reads, in one-letter code: Small ribosomal subunit protein uS13 (121 aa).

Residues glycine 94–lysine 121 are disordered.

It belongs to the universal ribosomal protein uS13 family. In terms of assembly, part of the 30S ribosomal subunit. Forms a loose heterodimer with protein S19. Forms two bridges to the 50S subunit in the 70S ribosome.

Its function is as follows. Located at the top of the head of the 30S subunit, it contacts several helices of the 16S rRNA. In the 70S ribosome it contacts the 23S rRNA (bridge B1a) and protein L5 of the 50S subunit (bridge B1b), connecting the 2 subunits; these bridges are implicated in subunit movement. Contacts the tRNAs in the A and P-sites. The protein is Small ribosomal subunit protein uS13 of Polaromonas sp. (strain JS666 / ATCC BAA-500).